The chain runs to 268 residues: MLSDILRAVILGIVEGVTEFLPVSSTGHLLLAERFFDLGDTNFWKSFTILIQLGAILAILALYFAKLWRIALGMFSDPAAQRFVIGVLVAFLPAAVIGALAGGYIKSYLFNPWVVCFSLIVGGAILLWVDQLDLQPTQDEATAFPLPMYLYIGCAQCLAMIPGVSRSGATIVGAMLLGADKRAAAEFSFFLAIPTMVGAFVYDLYKNRADMTMDHSLIVAIGFAVSFVTAIIVVKSFLAYVTRHGFTLFAWWRVIVGTLGLIALALGK.

Transmembrane regions (helical) follow at residues 47–67, 83–103, 109–129, 144–164, 184–204, 217–237, and 246–266; these read FTIL…FAKL, FVIG…LAGG, LFNP…LLWV, FPLP…IPGV, AAEF…VYDL, LIVA…VKSF, and FTLF…ALAL.

This sequence belongs to the UppP family.

Its subcellular location is the cell inner membrane. The catalysed reaction is di-trans,octa-cis-undecaprenyl diphosphate + H2O = di-trans,octa-cis-undecaprenyl phosphate + phosphate + H(+). Its function is as follows. Catalyzes the dephosphorylation of undecaprenyl diphosphate (UPP). Confers resistance to bacitracin. The chain is Undecaprenyl-diphosphatase from Rhodopseudomonas palustris (strain BisB18).